A 159-amino-acid chain; its full sequence is NADH-quinone oxidoreductase subunit B (159 aa).

[4Fe-4S] cluster contacts are provided by cysteine 37, cysteine 38, cysteine 102, and cysteine 132.

It belongs to the complex I 20 kDa subunit family. In terms of assembly, NDH-1 is composed of 14 different subunits. Subunits NuoB, C, D, E, F, and G constitute the peripheral sector of the complex. [4Fe-4S] cluster serves as cofactor.

The protein localises to the cell inner membrane. The catalysed reaction is a quinone + NADH + 5 H(+)(in) = a quinol + NAD(+) + 4 H(+)(out). In terms of biological role, NDH-1 shuttles electrons from NADH, via FMN and iron-sulfur (Fe-S) centers, to quinones in the respiratory chain. Couples the redox reaction to proton translocation (for every two electrons transferred, four hydrogen ions are translocated across the cytoplasmic membrane), and thus conserves the redox energy in a proton gradient. The sequence is that of NADH-quinone oxidoreductase subunit B from Polaromonas naphthalenivorans (strain CJ2).